The sequence spans 212 residues: Cytidylate kinase (212 aa).

An ATP-binding site is contributed by 9-17; the sequence is GPAAAGKGT.

Belongs to the cytidylate kinase family. Type 1 subfamily.

It localises to the cytoplasm. It carries out the reaction CMP + ATP = CDP + ADP. It catalyses the reaction dCMP + ATP = dCDP + ADP. The polypeptide is Cytidylate kinase (Rhizobium meliloti (strain 1021) (Ensifer meliloti)).